The chain runs to 142 residues: MAYKHIGVAISGNEEDALLVNKALELARHNDAHLTLIHIDDGLSELYPGIYFPATEDILQLLKNKSDNKLYKLTKNIQWPKTKLRIERGEMPETLLEIMQKEQCDLLVCGHHHSFINRLMPAYRGMINKLSADLLIVPFIDK.

It belongs to the universal stress protein A family.

Its subcellular location is the cytoplasm. Functionally, required for resistance to DNA-damaging agents. In Escherichia coli O157:H7, this protein is Universal stress protein D (uspD).